The sequence spans 401 residues: Haptoglobin (401 aa).

The signal sequence occupies residues 1–18; that stretch reads MSALQAVVTLLLCGQLLA. Sushi domains lie at 28-83 and 85-142; these read DSCP…ECEE and DSCP…ECEA. Intrachain disulfides connect Cys-49–Cys-81, Cys-106–Cys-140, and Cys-144–Cys-261. Residues 157 to 399 enclose the Peptidase S1 domain; that stretch reads IIGGSLDAKG…ILDWVRKTIA (243 aa). N-linked (GlcNAc...) asparagine glycans are attached at residues Asn-286 and Asn-316. Cystine bridges form between Cys-304–Cys-335 and Cys-346–Cys-376. The tract at residues 313-318 is interaction with CD163; it reads APKNKT.

It belongs to the peptidase S1 family. As to quaternary structure, tetramer of two alpha and two beta chains; disulfide-linked. The hemoglobin/haptoglobin complex is composed of a haptoglobin dimer bound to two hemoglobin alpha-beta dimers. Interacts with CD163. Interacts with ERGIC3. Expressed by the liver and secreted in plasma.

It is found in the secreted. It localises to the extracellular space. In terms of biological role, as a result of hemolysis, hemoglobin is found to accumulate in the kidney and is secreted in the urine. Haptoglobin captures, and combines with free plasma hemoglobin to allow hepatic recycling of heme iron and to prevent kidney damage. Haptoglobin also acts as an antioxidant, has antibacterial activity and plays a role in modulating many aspects of the acute phase response. Hemoglobin/haptoglobin complexes are rapidly cleared by the macrophage CD163 scavenger receptor expressed on the surface of liver Kupfer cells through an endocytic lysosomal degradation pathway. The protein is Haptoglobin (HP) of Bos taurus (Bovine).